A 525-amino-acid polypeptide reads, in one-letter code: MEGPAEWGPEAALGPEAVLRFLAERGGRALHAELVQHFRGALGGEPEQRARARAHFKELVNAVATVRVDPADGAKYVHLKKRFCEGPSEPSGDPPRIQVTAEPEAPDGPAGPEARDRLPDAAAPESLPGQGRELGEGEPPAPAHWPPLSAGARRKNSRRDVQPLPRTPAPGPSEDLELPPHGCEEADRGSSLVGATAQRPARQNLRDLVMGSSPQLKRSVCPGGSSPGSSSGGGRGRGGGDSDSASVASSSAEEESSGGGSVTLDPLEHAWMLSASDGKWDSLEGLLTCEPGLLVKRDFITGFTCLHWAAKHGRQELLAMLVNFANKHQLPVNIDARTSGGYTALHLAAMHGHVEVVKLLVGAYDADVDIRDYSGKKASQYLSRSIAEEIKNLVGALDEGDGESAAGSGGGRWRLSKVLPSHLITYKLSHALEDGGDHHHHHHSAEGWVGGKAKDPGRKASGSSSGRIKPRLNKIRFRTQIVHTTPSFRDPEQPLEGRGEEGVGEERPVKGHSPFTLRPKSNVFG.

The interval 84–263 (CEGPSEPSGD…EESSGGGSVT (180 aa)) is disordered. S88 carries the post-translational modification Phosphoserine. The segment covering 101 to 112 (AEPEAPDGPAGP) has biased composition (low complexity). 3 positions are modified to phosphoserine: S126, S213, and S226. The segment covering 230–241 (SSGGGRGRGGGD) has biased composition (gly residues). Positions 242 to 251 (SDSASVASSS) are enriched in low complexity. ANK repeat units lie at residues 301–330 (TGFTCLHWAAKHGRQELLAMLVNFANKHQL) and 340–370 (GGYTALHLAAMHGHVEVVKLLVGAYDADVDI). The interval 434–525 (DGGDHHHHHH…TLRPKSNVFG (92 aa)) is disordered. Over residues 468–477 (IKPRLNKIRF) the composition is skewed to basic residues. Positions 489–509 (RDPEQPLEGRGEEGVGEERPV) are enriched in basic and acidic residues.

This sequence belongs to the SOWAH family.

The protein is Ankyrin repeat domain-containing protein SOWAHC (SOWAHC) of Homo sapiens (Human).